The following is a 333-amino-acid chain: Ketol-acid reductoisomerase (NADP(+)) (333 aa).

The KARI N-terminal Rossmann domain occupies 2 to 182 (ANIYYDSDCD…GGGRAGILET (181 aa)). Residues 25-28 (YGSQ), lysine 48, serine 51, serine 53, and 83-86 (DTIQ) each bind NADP(+). Histidine 108 is an active-site residue. Glycine 134 contributes to the NADP(+) binding site. In terms of domain architecture, KARI C-terminal knotted spans 183-331 (SFREETETDL…KKLRSMMKWL (149 aa)). The Mg(2+) site is built by aspartate 191, glutamate 195, glutamate 227, and glutamate 231. Substrate is bound at residue serine 252.

The protein belongs to the ketol-acid reductoisomerase family. Mg(2+) serves as cofactor.

It carries out the reaction (2R)-2,3-dihydroxy-3-methylbutanoate + NADP(+) = (2S)-2-acetolactate + NADPH + H(+). The catalysed reaction is (2R,3R)-2,3-dihydroxy-3-methylpentanoate + NADP(+) = (S)-2-ethyl-2-hydroxy-3-oxobutanoate + NADPH + H(+). The protein operates within amino-acid biosynthesis; L-isoleucine biosynthesis; L-isoleucine from 2-oxobutanoate: step 2/4. It participates in amino-acid biosynthesis; L-valine biosynthesis; L-valine from pyruvate: step 2/4. Involved in the biosynthesis of branched-chain amino acids (BCAA). Catalyzes an alkyl-migration followed by a ketol-acid reduction of (S)-2-acetolactate (S2AL) to yield (R)-2,3-dihydroxy-isovalerate. In the isomerase reaction, S2AL is rearranged via a Mg-dependent methyl migration to produce 3-hydroxy-3-methyl-2-ketobutyrate (HMKB). In the reductase reaction, this 2-ketoacid undergoes a metal-dependent reduction by NADPH to yield (R)-2,3-dihydroxy-isovalerate. The polypeptide is Ketol-acid reductoisomerase (NADP(+)) (Leptospira interrogans serogroup Icterohaemorrhagiae serovar copenhageni (strain Fiocruz L1-130)).